We begin with the raw amino-acid sequence, 249 residues long: Myelin protein P0 (249 aa).

The N-terminal stretch at 1 to 29 is a signal peptide; sequence MALGAIGDGRLLLLLVGLLSASGPSPTLA. One can recognise an Ig-like V-type domain in the interval 30–143; sequence IHVYTPREVY…DIVGKSSQVT (114 aa). At 30 to 153 the chain is on the extracellular side; the sequence is IHVYTPREVY…LYVLEKVPTR (124 aa). A disulfide bridge connects residues Cys50 and Cys127. Asn122 carries N-linked (GlcNAc...) asparagine glycosylation. A helical transmembrane segment spans residues 154-179; it reads YGVVLGSIIGGVLLLVALLVAVVYLV. At 180–249 the chain is on the cytoplasmic side; sequence RFCWLRRQAV…APGEARKDKK (70 aa). The tract at residues 227-249 is disordered; it reads RSAKAAAEKKSKGAPGEARKDKK.

Belongs to the myelin P0 protein family. Found only in peripheral nervous system Schwann cells.

It is found in the cell membrane. Functionally, is an adhesion molecule necessary for normal myelination in the peripheral nervous system. It mediates adhesion between adjacent myelin wraps and ultimately drives myelin compaction. The polypeptide is Myelin protein P0 (MPZ) (Gallus gallus (Chicken)).